The chain runs to 563 residues: Protein NOXP20 (563 aa).

Positions 1–84 (MSDDAGDTLA…ANALEPPLNG (84 aa)) are disordered. Residues 56–68 (AAVQGAGAAAIGP) show a composition bias toward low complexity. Serine 120 is subject to Phosphoserine. The tract at residues 165-206 (VNSGSSEGAQPNTENGVPEITDAATDQGPAESPPTSPSSASR) is disordered. Over residues 166-179 (NSGSSEGAQPNTEN) the composition is skewed to polar residues. A phosphothreonine mark is found at threonine 185 and threonine 189. Position 196 is a phosphoserine (serine 196). Threonine 199 is subject to Phosphothreonine. Serine 202 and serine 261 each carry phosphoserine. The stretch at 343 to 367 (AAKELENEENQEEQGLEEKGEEFAR) forms a coiled coil. The disordered stretch occupies residues 411-436 (SEEETKKEEKEEKSQDPQEDKKEEKK).

This sequence belongs to the FAM114 family.

It localises to the cytoplasm. Functionally, may play a role in neuronal cell development. In Homo sapiens (Human), this protein is Protein NOXP20 (FAM114A1).